The sequence spans 374 residues: Tuliposide A-converting enzyme b2, amyloplastic (374 aa).

An amyloplast-targeting transit peptide spans 1 to 68 (MSVALFCGPP…TNSSLSPSPT (68 aa)). The active-site Acyl-ester intermediate is Ser226. Residues Asp316 and His348 each act as charge relay system in the active site.

This sequence belongs to the AB hydrolase superfamily. Homodimer. Highly expressed in pistil and bulb scales. Lower expression in stem, and barely detected in root, leaf, petal and stamen.

It is found in the plastid. It localises to the amyloplast. It catalyses the reaction 6-tuliposide A = tulipalin A + D-glucose. Functionally, lactone-forming carboxylesterases, specifically catalyzing intramolecular transesterification, but not hydrolysis. Involved in the biosynthesis of tulipalins, defensive chemicals that show antimicrobial activities against a broad range of strains of bacteria and fungi. Substrates are 6-tuliposide A &gt; 6-tuliposide B. The polypeptide is Tuliposide A-converting enzyme b2, amyloplastic (TCEA-B2) (Tulipa gesneriana (Garden tulip)).